Here is a 320-residue protein sequence, read N- to C-terminus: Fructose-1,6-bisphosphatase class 1 (320 aa).

Positions 84, 103, 105, and 106 each coordinate Mg(2+). Residues 106-109 (DGSS), Asn196, and Lys262 contribute to the substrate site. Glu268 is a Mg(2+) binding site.

This sequence belongs to the FBPase class 1 family. As to quaternary structure, homotetramer. Mg(2+) is required as a cofactor.

Its subcellular location is the cytoplasm. The enzyme catalyses beta-D-fructose 1,6-bisphosphate + H2O = beta-D-fructose 6-phosphate + phosphate. It functions in the pathway carbohydrate biosynthesis; gluconeogenesis. This is Fructose-1,6-bisphosphatase class 1 from Shewanella amazonensis (strain ATCC BAA-1098 / SB2B).